Consider the following 144-residue polypeptide: Transcriptional regulator SlyA (144 aa).

The HTH marR-type domain occupies 2-135; the sequence is ESTLGSDLAR…LVGLIGKLEQ (134 aa). The H-T-H motif DNA-binding region spans 49-72; the sequence is QIQLAKAIGIEQPSLVRTLDQLEE.

Belongs to the SlyA family. Homodimer.

Its function is as follows. Transcription regulator that can specifically activate or repress expression of target genes. This chain is Transcriptional regulator SlyA, found in Serratia proteamaculans (strain 568).